We begin with the raw amino-acid sequence, 343 residues long: Sorbitol dehydrogenase (343 aa).

The segment at M1 to K26 is disordered. Zn(2+) is bound by residues C39, H60, and E61. E146 serves as a coordination point for substrate. NAD(+) contacts are provided by residues I174, R200, and V262–L264.

This sequence belongs to the zinc-containing alcohol dehydrogenase family. As to quaternary structure, homotetramer. It depends on Zn(2+) as a cofactor.

The enzyme catalyses keto-D-fructose + NADH + H(+) = D-sorbitol + NAD(+). It carries out the reaction xylitol + NAD(+) = D-xylulose + NADH + H(+). The catalysed reaction is L-iditol + NAD(+) = keto-L-sorbose + NADH + H(+). In terms of biological role, polyol dehydrogenase that catalyzes the NAD(+)-dependent oxidation of various sugar alcohols. Is active with D-sorbitol (D-glucitol), xylitol and L-iditol as substrates, leading to the C2-oxidized products D-fructose, D-xylulose and L-sorbose, respectively. The sequence is that of Sorbitol dehydrogenase (gutB) from Halalkalibacterium halodurans (strain ATCC BAA-125 / DSM 18197 / FERM 7344 / JCM 9153 / C-125) (Bacillus halodurans).